The sequence spans 612 residues: Alpha-glycerophosphate oxidase (612 aa).

Residue Asp21–Glu49 participates in FAD binding. A compositionally biased stretch (basic and acidic residues) spans Glu399–Asp408. The interval Glu399–Phe418 is disordered.

The protein belongs to the FAD-dependent glycerol-3-phosphate dehydrogenase family. It depends on FAD as a cofactor.

It is found in the cytoplasm. It carries out the reaction sn-glycerol 3-phosphate + O2 = dihydroxyacetone phosphate + H2O2. This chain is Alpha-glycerophosphate oxidase (glpO), found in Streptococcus pyogenes serotype M6 (strain ATCC BAA-946 / MGAS10394).